The primary structure comprises 261 residues: Putative cysteine protease YopT-like y4zC (261 aa).

Positions 1-15 (MHSPISGSFTSSTQV) are enriched in polar residues. Disordered regions lie at residues 1–48 (MHSP…CPDK) and 54–73 (SKPQASDPNNPSTSSPARPS). Residues 61 to 73 (PNNPSTSSPARPS) show a composition bias toward low complexity. Residues C93, H205, and D220 contribute to the active site.

Belongs to the peptidase C58 family.

In terms of biological role, potential cysteine protease, which may play a central role after invasion of host cell. This Sinorhizobium fredii (strain NBRC 101917 / NGR234) protein is Putative cysteine protease YopT-like y4zC.